Consider the following 1406-residue polypeptide: EF-hand calcium-binding domain-containing protein 5 (1406 aa).

Residues 255–655 form a disordered region; that stretch reads NKDLPQQQRD…KACEPKPQHV (401 aa). Polar residues-rich tracts occupy residues 258 to 294, 322 to 334, 342 to 354, 362 to 373, 382 to 393, 402 to 414, 422 to 434, and 442 to 464; these read LPQQ…SLTG, RRSS…QQRG, RRSSTVEQTRQR, RRSSTVEQTQRR, and RRSS…SLPE. Basic and acidic residues predominate over residues 465-477; sequence QESHRGSITEGSH. Residues 501–513 show a composition bias toward low complexity; it reads DDSGSAGSRRGSG. The span at 564–577 shows a compositional bias: acidic residues; sequence QELDEDSTPQLEDD. Basic and acidic residues-rich tracts occupy residues 578–598 and 638–655; these read SALK…EEKP and SKRD…PQHV. One can recognise an EF-hand domain in the interval 773 to 808; sequence RRRILLQAIFEKWDNDGSGFLDLNEVDDLLYTYKEG. Positions 786, 788, 790, and 797 each coordinate Ca(2+).

This is EF-hand calcium-binding domain-containing protein 5 (Efcab5) from Mus musculus (Mouse).